Consider the following 259-residue polypeptide: MHIDVTGRGPDLVLIHGWALQGGVFAPLVQRLADQFTLHLVDLPGHGHSREDTTPLRLPFVVGAIAAATPPAVWCGWSLGGLFALHAAATLPKVRGLAMIAATPRFVRGEDWPHAVEPAVFEQFGRELATDFGGTLERFLALDVMGSAHAREELRTLRQRLVERGAPTERALLEGLRLLESTDLRGALPTLGKPSLWIAGQRDRLVSPVAMQAAAALAPGAQALTIAHGGHAPFLGHADEVAAALQHFVAALSPADGGQ.

Substrate contacts are provided by residues Trp18, 78–79, and 139–143; these read SL and FLALD. The Nucleophile role is filled by Ser78. Residues Asp203 and His231 contribute to the active site. His231 provides a ligand contact to substrate.

The protein belongs to the AB hydrolase superfamily. Carboxylesterase BioH family. As to quaternary structure, monomer.

It is found in the cytoplasm. The catalysed reaction is 6-carboxyhexanoyl-[ACP] methyl ester + H2O = 6-carboxyhexanoyl-[ACP] + methanol + H(+). Its pathway is cofactor biosynthesis; biotin biosynthesis. Functionally, the physiological role of BioH is to remove the methyl group introduced by BioC when the pimeloyl moiety is complete. It allows to synthesize pimeloyl-ACP via the fatty acid synthetic pathway through the hydrolysis of the ester bonds of pimeloyl-ACP esters. The protein is Pimeloyl-[acyl-carrier protein] methyl ester esterase of Stenotrophomonas maltophilia (strain K279a).